We begin with the raw amino-acid sequence, 304 residues long: NAD kinase (304 aa).

Aspartate 77 serves as the catalytic Proton acceptor. NAD(+)-binding positions include 77 to 78 (DG), arginine 82, 151 to 152 (NE), arginine 162, aspartate 181, and 192 to 197 (TAYSFS).

Belongs to the NAD kinase family. Requires a divalent metal cation as cofactor.

It is found in the cytoplasm. The catalysed reaction is NAD(+) + ATP = ADP + NADP(+) + H(+). In terms of biological role, involved in the regulation of the intracellular balance of NAD and NADP, and is a key enzyme in the biosynthesis of NADP. Catalyzes specifically the phosphorylation on 2'-hydroxyl of the adenosine moiety of NAD to yield NADP. The protein is NAD kinase of Leifsonia xyli subsp. xyli (strain CTCB07).